Here is a 308-residue protein sequence, read N- to C-terminus: Cytochrome b (308 aa).

4 consecutive transmembrane segments (helical) span residues 1–21, 45–66, 81–101, and 146–166; these read FGLLLGICLIVQIVTGLLLAA, WLIRNLHANGASFFFICIYLHI, WNIGVILLLTLMATAFVGYVL, and FFALHFLLPFVIAGLTLVHLT. Histidine 51 and histidine 65 together coordinate heme b. Positions 150 and 164 each coordinate heme b. An a ubiquinone-binding site is contributed by histidine 169. The next 3 helical transmembrane spans lie at 194–214, 256–276, and 288–308; these read TKDMLGFALMLIPLITLALFS, LGGVLALAASVLVLFLIPLLH, and LSQILFWTLVANLLVLTWVGS.

This sequence belongs to the cytochrome b family. The cytochrome bc1 complex contains 11 subunits: 3 respiratory subunits (MT-CYB, CYC1 and UQCRFS1), 2 core proteins (UQCRC1 and UQCRC2) and 6 low-molecular weight proteins (UQCRH/QCR6, UQCRB/QCR7, UQCRQ/QCR8, UQCR10/QCR9, UQCR11/QCR10 and a cleavage product of UQCRFS1). This cytochrome bc1 complex then forms a dimer. Heme b serves as cofactor.

The protein resides in the mitochondrion inner membrane. Its function is as follows. Component of the ubiquinol-cytochrome c reductase complex (complex III or cytochrome b-c1 complex) that is part of the mitochondrial respiratory chain. The b-c1 complex mediates electron transfer from ubiquinol to cytochrome c. Contributes to the generation of a proton gradient across the mitochondrial membrane that is then used for ATP synthesis. This is Cytochrome b (MT-CYB) from Pomatostomus temporalis (Grey-crowned babbler).